A 378-amino-acid chain; its full sequence is Putative glutamate--cysteine ligase 2 (378 aa).

The protein belongs to the glutamate--cysteine ligase type 2 family. YbdK subfamily.

The catalysed reaction is L-cysteine + L-glutamate + ATP = gamma-L-glutamyl-L-cysteine + ADP + phosphate + H(+). ATP-dependent carboxylate-amine ligase which exhibits weak glutamate--cysteine ligase activity. This is Putative glutamate--cysteine ligase 2 from Bdellovibrio bacteriovorus (strain ATCC 15356 / DSM 50701 / NCIMB 9529 / HD100).